Here is a 415-residue protein sequence, read N- to C-terminus: MSLSNKLPVTDVDLKGKRVLIRVDFNVPLDENENVTNPQRIVGALPTIKYAIDNGRKAVVLMSHLGRPDGKVNPKYSLKPVVPVLEELLGKSVTFTEDCIGPQTEETVNKASDGQVILLENLRFHAEEEGSSKDAEGKKVKADKADVDRSASLTALGDVYVNDAFGTAQRAHSSMVGVDLPQKAAGFLVKKELEYFAKALESPARPFLAILGGAKVSDKIPVIDNLLPKVNSLIIIGGMALTFKKTLENVKIGNSLFDEAGSKILGEIVEKAKKHNVEIVLPVDYVTADKFSADATVGSATTQRIPDGYMGSDVGPESVKLYQKTIAEAKTILWNGPPGVFELKPSPRPTEATLDAAVKAAESGSIVIIGGGDTATVAAKYKAEDKISHVSTGGGASLELLEGKELPGVAALSSK.

Valine 23, aspartate 24, phenylalanine 25, asparagine 26, glutamine 39, arginine 40, serine 63, histidine 64, glycine 66, arginine 67, leucine 122, arginine 123, and arginine 170 together coordinate (2R)-3-phosphoglycerate. Glycine 213 is a binding site for ADP. CDP is bound at residue glycine 213. AMP is bound by residues alanine 214 and lysine 215. Alanine 214 lines the ATP pocket. Alanine 214 contributes to the Mg(2+) binding site. Aspartate 218 lines the CDP pocket. A Mg(2+)-binding site is contributed by aspartate 218. Lysine 219 lines the AMP pocket. Position 219 (lysine 219) interacts with ATP. ADP is bound at residue glycine 237. Glycine 237 serves as a coordination point for CDP. AMP contacts are provided by glycine 238 and glycine 311. Residues glycine 238 and glycine 311 each coordinate ATP. CDP-binding residues include glycine 336 and phenylalanine 341. An ADP-binding site is contributed by phenylalanine 341. Glutamate 342 provides a ligand contact to AMP. Positions 342, 373, and 374 each coordinate ATP. Position 373 (aspartate 373) interacts with Mg(2+).

The protein belongs to the phosphoglycerate kinase family. As to quaternary structure, monomer. The cofactor is Mg(2+).

It is found in the cytoplasm. It localises to the mitochondrion. The catalysed reaction is (2R)-3-phosphoglycerate + ATP = (2R)-3-phospho-glyceroyl phosphate + ADP. The protein operates within carbohydrate degradation; glycolysis; pyruvate from D-glyceraldehyde 3-phosphate: step 2/5. Catalyzes one of the two ATP producing reactions in the glycolytic pathway via the reversible conversion of 1,3-diphosphoglycerate to 3-phosphoglycerate. Both L- and D- forms of purine and pyrimidine nucleotides can be used as substrates, but the activity is much lower on pyrimidines. Negatively regulates the biosynthesis of acetyl-CoA from pyruvate in the mitochondrion. The protein is Phosphoglycerate kinase (PGKA) of Penicillium chrysogenum (Penicillium notatum).